The sequence spans 395 residues: Flagellin A (395 aa).

The protein belongs to the bacterial flagellin family.

The protein resides in the secreted. It localises to the bacterial flagellum. In terms of biological role, flagellin is the subunit protein which polymerizes to form the filaments of bacterial flagella. Homomer of FlaA is able to form a functional filament. This is Flagellin A (flaA) from Rhizobium meliloti (Ensifer meliloti).